A 194-amino-acid polypeptide reads, in one-letter code: HTH-type transcriptional regulator BetI (194 aa).

The region spanning Glu8–Leu68 is the HTH tetR-type domain. The segment at residues Thr31–Phe50 is a DNA-binding region (H-T-H motif).

Its pathway is amine and polyamine biosynthesis; betaine biosynthesis via choline pathway [regulation]. In terms of biological role, repressor involved in the biosynthesis of the osmoprotectant glycine betaine. It represses transcription of the choline transporter BetT and the genes of BetAB involved in the synthesis of glycine betaine. The polypeptide is HTH-type transcriptional regulator BetI (Burkholderia cenocepacia (strain ATCC BAA-245 / DSM 16553 / LMG 16656 / NCTC 13227 / J2315 / CF5610) (Burkholderia cepacia (strain J2315))).